We begin with the raw amino-acid sequence, 334 residues long: Ornithine carbamoyltransferase (334 aa).

Carbamoyl phosphate-binding positions include 57 to 60 (STRT), Gln-84, Arg-108, and 135 to 138 (HPTQ). Residues Asn-169, Asp-233, and 237 to 238 (SM) each bind L-ornithine. Carbamoyl phosphate-binding positions include 275–276 (CL) and Arg-320.

It belongs to the aspartate/ornithine carbamoyltransferase superfamily. OTCase family.

The protein localises to the cytoplasm. It catalyses the reaction carbamoyl phosphate + L-ornithine = L-citrulline + phosphate + H(+). It participates in amino-acid biosynthesis; L-arginine biosynthesis; L-arginine from L-ornithine and carbamoyl phosphate: step 1/3. In terms of biological role, reversibly catalyzes the transfer of the carbamoyl group from carbamoyl phosphate (CP) to the N(epsilon) atom of ornithine (ORN) to produce L-citrulline. This Vibrio campbellii (strain ATCC BAA-1116) protein is Ornithine carbamoyltransferase.